Reading from the N-terminus, the 259-residue chain is Transcription factor bHLH80 (259 aa).

The disordered stretch occupies residues 1-25; it reads MQSTHISGGSSGGGGGGGGEVSRSG. Residues 9-20 show a composition bias toward gly residues; sequence GSSGGGGGGGGE. The bHLH domain occupies 187–237; the sequence is CATHPRSIAERVRRTRISDRIRRLQELVPNMDKQTNTADMLEEAVEYVKAL.

As to quaternary structure, homodimer. As to expression, expressed constitutively in roots, leaves, stems, and flowers.

Its subcellular location is the nucleus. The polypeptide is Transcription factor bHLH80 (BHLH80) (Arabidopsis thaliana (Mouse-ear cress)).